We begin with the raw amino-acid sequence, 213 residues long: ATP-dependent dethiobiotin synthetase BioD (213 aa).

Position 13-18 (13-18) interacts with ATP; the sequence is GIGKTV. A Mg(2+)-binding site is contributed by Thr17. Lys33 is an active-site residue. Residue Glu100 coordinates Mg(2+). Residues 100–103 and 184–186 each bind ATP; these read EGAG and PRL.

The protein belongs to the dethiobiotin synthetase family. As to quaternary structure, homodimer. Mg(2+) serves as cofactor.

Its subcellular location is the cytoplasm. It catalyses the reaction (7R,8S)-7,8-diammoniononanoate + CO2 + ATP = (4R,5S)-dethiobiotin + ADP + phosphate + 3 H(+). It functions in the pathway cofactor biosynthesis; biotin biosynthesis; biotin from 7,8-diaminononanoate: step 1/2. Functionally, catalyzes a mechanistically unusual reaction, the ATP-dependent insertion of CO2 between the N7 and N8 nitrogen atoms of 7,8-diaminopelargonic acid (DAPA, also called 7,8-diammoniononanoate) to form a ureido ring. The polypeptide is ATP-dependent dethiobiotin synthetase BioD (Rhodopseudomonas palustris (strain HaA2)).